The primary structure comprises 76 residues: Large ribosomal subunit protein eL20 (76 aa).

The protein belongs to the eukaryotic ribosomal protein eL20 family. Part of the 50S ribosomal subunit. Binds 23S rRNA.

This Methanococcus maripaludis (strain C5 / ATCC BAA-1333) protein is Large ribosomal subunit protein eL20.